A 432-amino-acid polypeptide reads, in one-letter code: Cytochrome c biogenesis protein CcsB (432 aa).

A run of 3 helical transmembrane segments spans residues 18-38 (LRLA…GTGI), 76-96 (SGWF…CSWR), and 166-186 (VGPL…AWGA).

It belongs to the Ccs1/CcsB family. As to quaternary structure, may interact with CcsA.

The protein resides in the cellular thylakoid membrane. In terms of biological role, required during biogenesis of c-type cytochromes (cytochrome c6 and cytochrome f) at the step of heme attachment. The polypeptide is Cytochrome c biogenesis protein CcsB (Synechococcus sp. (strain CC9605)).